The chain runs to 221 residues: ATP-dependent Clp protease proteolytic subunit 3 (221 aa).

S118 functions as the Nucleophile in the catalytic mechanism. The active site involves H143.

It belongs to the peptidase S14 family. In terms of assembly, fourteen ClpP subunits assemble into 2 heptameric rings which stack back to back to give a disk-like structure with a central cavity, resembling the structure of eukaryotic proteasomes.

The protein localises to the cytoplasm. The enzyme catalyses Hydrolysis of proteins to small peptides in the presence of ATP and magnesium. alpha-casein is the usual test substrate. In the absence of ATP, only oligopeptides shorter than five residues are hydrolyzed (such as succinyl-Leu-Tyr-|-NHMec, and Leu-Tyr-Leu-|-Tyr-Trp, in which cleavage of the -Tyr-|-Leu- and -Tyr-|-Trp bonds also occurs).. Cleaves peptides in various proteins in a process that requires ATP hydrolysis. Has a chymotrypsin-like activity. Plays a major role in the degradation of misfolded proteins. The chain is ATP-dependent Clp protease proteolytic subunit 3 from Nocardia farcinica (strain IFM 10152).